The primary structure comprises 170 residues: Small ribosomal subunit protein uS5 (170 aa).

The S5 DRBM domain maps to 16-79; it reads IEDQLVAINR…EAGKKNMISV (64 aa).

It belongs to the universal ribosomal protein uS5 family. In terms of assembly, part of the 30S ribosomal subunit. Contacts proteins S4 and S8.

Its function is as follows. With S4 and S12 plays an important role in translational accuracy. In terms of biological role, located at the back of the 30S subunit body where it stabilizes the conformation of the head with respect to the body. The protein is Small ribosomal subunit protein uS5 of Lactobacillus delbrueckii subsp. bulgaricus (strain ATCC 11842 / DSM 20081 / BCRC 10696 / JCM 1002 / NBRC 13953 / NCIMB 11778 / NCTC 12712 / WDCM 00102 / Lb 14).